A 785-amino-acid chain; its full sequence is Protein kintoun (785 aa).

Composition is skewed to basic and acidic residues over residues 622-638 (EHNEQCTDHSESERDTS) and 662-679 (HNIELGREHTSERDKEPK). 2 disordered regions span residues 622-698 (EHNE…DSHL) and 719-749 (KSSVQTTQESDLDEDDMPDNSDHLQNSASSN). A compositionally biased stretch (polar residues) spans 681-695 (TSCTAESTSGQQPND). Residues 728 to 737 (SDLDEDDMPD) are compositionally biased toward acidic residues.

This sequence belongs to the PIH1 family. Kintoun subfamily.

The protein localises to the cytoplasm. The protein resides in the dynein axonemal particle. Required for cytoplasmic pre-assembly of axonemal dyneins, thereby playing a central role in motility in cilia and flagella. Involved in pre-assembly of dynein arm complexes in the cytoplasm before intraflagellar transport loads them for the ciliary compartment. This chain is Protein kintoun, found in Xenopus tropicalis (Western clawed frog).